The sequence spans 272 residues: 3-methyl-2-oxobutanoate hydroxymethyltransferase (272 aa).

Mg(2+)-binding residues include aspartate 50 and aspartate 89. 3-methyl-2-oxobutanoate-binding positions include 50–51, aspartate 89, and lysine 119; that span reads DS. Glutamate 121 serves as a coordination point for Mg(2+). Glutamate 188 functions as the Proton acceptor in the catalytic mechanism.

Belongs to the PanB family. In terms of assembly, homodecamer; pentamer of dimers. Requires Mg(2+) as cofactor.

The protein resides in the cytoplasm. It catalyses the reaction 3-methyl-2-oxobutanoate + (6R)-5,10-methylene-5,6,7,8-tetrahydrofolate + H2O = 2-dehydropantoate + (6S)-5,6,7,8-tetrahydrofolate. The protein operates within cofactor biosynthesis; (R)-pantothenate biosynthesis; (R)-pantoate from 3-methyl-2-oxobutanoate: step 1/2. Catalyzes the reversible reaction in which hydroxymethyl group from 5,10-methylenetetrahydrofolate is transferred onto alpha-ketoisovalerate to form ketopantoate. The polypeptide is 3-methyl-2-oxobutanoate hydroxymethyltransferase (Methylobacterium radiotolerans (strain ATCC 27329 / DSM 1819 / JCM 2831 / NBRC 15690 / NCIMB 10815 / 0-1)).